We begin with the raw amino-acid sequence, 500 residues long: Na(+)/H(+) antiporter NhaB (500 aa).

The next 13 helical transmembrane spans lie at 11 to 31, 34 to 54, 58 to 78, 96 to 116, 121 to 141, 145 to 165, 205 to 225, 241 to 261, 311 to 331, 350 to 370, 394 to 414, 450 to 470, and 477 to 497; these read HGFL…FLVL, LLLA…EFIF, MALK…ALLL, VILL…LLLF, ILLG…LSAF, FLDA…FYAV, LLMH…VGEP, FLLK…LTCV, ILII…LMVI, FQDA…VAVI, MLYL…VATI, ATPN…APLI, and MVWM…WAVT.

This sequence belongs to the NhaB Na(+)/H(+) (TC 2.A.34) antiporter family.

Its subcellular location is the cell inner membrane. It carries out the reaction 2 Na(+)(in) + 3 H(+)(out) = 2 Na(+)(out) + 3 H(+)(in). Na(+)/H(+) antiporter that extrudes sodium in exchange for external protons. The protein is Na(+)/H(+) antiporter NhaB of Pseudomonas putida (strain ATCC 700007 / DSM 6899 / JCM 31910 / BCRC 17059 / LMG 24140 / F1).